The primary structure comprises 470 residues: MAMATATPAAQNEQQEKGGLEYVYLSGLGNSLSSEAVAGTLPRGQNSPLVCPLGLYAEQLSGTPFTAPRARNLRTWLYRIKPSVTHEPFHPRRPAHPRLIGDFDRTTTDTVATPTQLRWRPADVPPHHPPLDFIDGLYTVCGAGSSFLRHGYAIHMYAANKSMDGCAFCNADGDFLIVPQQGKLLITTECGKLLVPPGEIVVIPQGFRFAVDLPDGPSRGYVSEIFGTHFQLPDLGPIGANGLASARDFLSPTAWFEQVHRPGYTIVQKYGGELFTATQDFSPFNVVAWHGNYVPYKYDLSKFCPFNTVLFDHADPSVNTVLTAPTDKPGVALLDFVIFPPRWLVAENTFRPPYYHRNCMSEFMGLIYGIYEAKADGFLPGGASLHSCMTPHGPDTKTYEATISRPDANEPSRLSGTLAFMFESALIPRVCQWALDSPSRDLDYYQCWIGLKSHFSHDNGGATSEEPCRK.

3 residues coordinate Fe cation: His356, Glu362, and His392.

The protein belongs to the homogentisate dioxygenase family. Requires Fe cation as cofactor.

It carries out the reaction homogentisate + O2 = 4-maleylacetoacetate + H(+). It participates in amino-acid degradation; L-phenylalanine degradation; acetoacetate and fumarate from L-phenylalanine: step 4/6. The polypeptide is Homogentisate 1,2-dioxygenase (HGO) (Oryza sativa subsp. japonica (Rice)).